A 115-amino-acid polypeptide reads, in one-letter code: Regulator of ribonuclease activity B (115 aa).

Belongs to the RraB family. As to quaternary structure, interacts with the C-terminal region of Rne.

It is found in the cytoplasm. Its function is as follows. Globally modulates RNA abundance by binding to RNase E (Rne) and regulating its endonucleolytic activity. Can modulate Rne action in a substrate-dependent manner by altering the composition of the degradosome. The sequence is that of Regulator of ribonuclease activity B from Aeromonas hydrophila subsp. hydrophila (strain ATCC 7966 / DSM 30187 / BCRC 13018 / CCUG 14551 / JCM 1027 / KCTC 2358 / NCIMB 9240 / NCTC 8049).